The following is a 603-amino-acid chain: UvrABC system protein C (603 aa).

One can recognise a GIY-YIG domain in the interval 15–92 (DQPGCYLMKN…IQKHQPYYNI (78 aa)). The 36-residue stretch at 197–232 (AQVKKQLTARMERAAGQLEFERAAEIRDQLHYIEVT) folds into the UVR domain.

It belongs to the UvrC family. As to quaternary structure, interacts with UvrB in an incision complex.

It localises to the cytoplasm. The UvrABC repair system catalyzes the recognition and processing of DNA lesions. UvrC both incises the 5' and 3' sides of the lesion. The N-terminal half is responsible for the 3' incision and the C-terminal half is responsible for the 5' incision. The polypeptide is UvrABC system protein C (Limosilactobacillus fermentum (strain NBRC 3956 / LMG 18251) (Lactobacillus fermentum)).